Consider the following 472-residue polypeptide: Serine incorporator 3 (472 aa).

Residues 1–95 (MGAVLGVFSL…KECDVLVRYK (95 aa)) are Extracellular-facing. N-linked (GlcNAc...) asparagine glycosylation is present at asparagine 34. A helical membrane pass occupies residues 96 to 116 (AVYRISFALAVFFFAFSLLML). At 117–131 (NVKTSKDPRAAIHNG) the chain is on the cytoplasmic side. Residues 132 to 152 (FWFFKIAAIVGVMVGSFYIPG) traverse the membrane as a helical segment. Residues 153–158 (GHFNTA) are Extracellular-facing. The helical transmembrane segment at 159–179 (WFVIGMVGAAFFILIQLVLLV) threads the bilayer. The Cytoplasmic segment spans residues 180–202 (DFAHSWNESWVNRMEEGNPKCWY). A helical transmembrane segment spans residues 203–223 (AALLSVTSLFYILSIIFAGLL). Over 224-238 (YTYYTKPDGCTENKF) the chain is Extracellular. A helical membrane pass occupies residues 239–259 (FISFNLILCVVISVLSIHPKI). The Cytoplasmic portion of the chain corresponds to 260-328 (QEHQPRSGLL…APTPAVPLQS (69 aa)). A helical membrane pass occupies residues 329 to 349 (GPSLNKENFIGLLVFVLSLSY). The Extracellular portion of the chain corresponds to 350–405 (SSIRNSSNSQVSKLTLSGSDSVILRDTAANGASDEEDGRPRRAVDNEREGVQYNYS). Residue asparagine 354 is glycosylated (N-linked (GlcNAc...) asparagine). Residue serine 370 is modified to Phosphoserine. N-linked (GlcNAc...) asparagine glycosylation is present at asparagine 403. Residues 406–426 (MFHLMLCSASLYIMMTLTNWY) form a helical membrane-spanning segment. The Cytoplasmic segment spans residues 427-445 (SPDANFQSMTSKWPAVWVK). The helical transmembrane segment at 446 to 466 (ISSSWVCLLLYVWTLVAPLVL) threads the bilayer. At 467–472 (TNRDFS) the chain is on the extracellular side.

This sequence belongs to the TDE1 family. In terms of processing, N-glycosylated.

The protein resides in the cell membrane. The protein localises to the golgi apparatus membrane. It carries out the reaction a 1,2-diacyl-sn-glycero-3-phospho-L-serine(in) = a 1,2-diacyl-sn-glycero-3-phospho-L-serine(out). The catalysed reaction is a 1,2-diacyl-sn-glycero-3-phosphocholine(in) = a 1,2-diacyl-sn-glycero-3-phosphocholine(out). It catalyses the reaction a 1,2-diacyl-sn-glycero-3-phosphoethanolamine(in) = a 1,2-diacyl-sn-glycero-3-phosphoethanolamine(out). Restriction factor required to restrict infectivity of gammaretroviruses: acts by inhibiting an early step of viral infection. Impairs the penetration of the viral particle into the cytoplasm. Non-ATP-dependent, non-specific lipid transporter for phosphatidylserine, phosphatidylcholine, and phosphatidylethanolamine. Functions as a scramblase that flips lipids in both directions across the membrane. Phospholipid scrambling results in gammaretroviral surface exposure of phosphatidylserine and loss of membrane asymmetry, which leads to loss of infectivity. The chain is Serine incorporator 3 (SERINC3) from Bos taurus (Bovine).